The following is a 202-amino-acid chain: CASP-like protein 2B1 (202 aa).

Residues 1–29 (MSYLGVGVSPGNVPVYHGSNLKVIDKRVR) lie on the Cytoplasmic side of the membrane. A helical transmembrane segment spans residues 30–50 (LAELVLRCLICGLGVLAAVLV). Residues 51 to 72 (GTDTQVKEIFSIQKKARFTDMK) are Extracellular-facing. A helical transmembrane segment spans residues 73–93 (ALVFLVIANGIAAAYSLLQGV). The Cytoplasmic portion of the chain corresponds to 94–109 (RCVVGMVRGSALFSKP). Residues 110–130 (LAWAIFSGDQMMAYLTVAAVA) traverse the membrane as a helical segment. Residues 131-164 (AAAQSAVFAKLGQPELQWMKICNMYGKFCNQVGE) are Extracellular-facing. Residues 165–185 (GIASALLVSVSMVVLSCISAF) form a helical membrane-spanning segment. The Cytoplasmic segment spans residues 186 to 202 (SLFRLYGANKGKDCTRW).

This sequence belongs to the Casparian strip membrane proteins (CASP) family. As to quaternary structure, homodimer and heterodimers.

The protein resides in the cell membrane. The chain is CASP-like protein 2B1 from Ricinus communis (Castor bean).